The following is a 233-amino-acid chain: UPF0502 protein YpsIP31758_2048 (233 aa).

It belongs to the UPF0502 family.

In Yersinia pseudotuberculosis serotype O:1b (strain IP 31758), this protein is UPF0502 protein YpsIP31758_2048.